Here is a 563-residue protein sequence, read N- to C-terminus: Chaperonin GroEL 1 (563 aa).

ATP-binding positions include 29–32 (TIGP), 86–90 (DGTTT), Gly413, 476–478 (NAA), and Asp492. Positions 520–545 (DKPEPPSPAGGEGGGDPMGGMGGMGG) are disordered. Positions 529–545 (GGEGGGDPMGGMGGMGG) are enriched in gly residues.

Belongs to the chaperonin (HSP60) family. In terms of assembly, forms a cylinder of 14 subunits composed of two heptameric rings stacked back-to-back. Interacts with the co-chaperonin GroES.

It localises to the cytoplasm. It catalyses the reaction ATP + H2O + a folded polypeptide = ADP + phosphate + an unfolded polypeptide.. Functionally, together with its co-chaperonin GroES, plays an essential role in assisting protein folding. The GroEL-GroES system forms a nano-cage that allows encapsulation of the non-native substrate proteins and provides a physical environment optimized to promote and accelerate protein folding. This chain is Chaperonin GroEL 1, found in Prochlorococcus marinus (strain SARG / CCMP1375 / SS120).